Consider the following 332-residue polypeptide: D-lactate dehydrogenase (332 aa).

Residues 155–156 (RI), aspartate 175, 206–207 (VP), asparagine 212, 233–235 (FAR), and aspartate 259 contribute to the NAD(+) site. Residue arginine 235 is part of the active site. The active site involves glutamate 264. The active-site Proton donor is histidine 296.

Belongs to the D-isomer specific 2-hydroxyacid dehydrogenase family.

It catalyses the reaction (R)-lactate + NAD(+) = pyruvate + NADH + H(+). The chain is D-lactate dehydrogenase (ldhD) from Lactiplantibacillus plantarum (strain ATCC BAA-793 / NCIMB 8826 / WCFS1) (Lactobacillus plantarum).